We begin with the raw amino-acid sequence, 544 residues long: Chaperonin GroEL 1 (544 aa).

ATP-binding positions include 29–32, 86–90, Gly-413, 479–481, and Asp-495; these read TLGP, DGTTT, and NAA.

Belongs to the chaperonin (HSP60) family. As to quaternary structure, forms a cylinder of 14 subunits composed of two heptameric rings stacked back-to-back. Interacts with the co-chaperonin GroES.

The protein localises to the cytoplasm. It catalyses the reaction ATP + H2O + a folded polypeptide = ADP + phosphate + an unfolded polypeptide.. Together with its co-chaperonin GroES, plays an essential role in assisting protein folding. The GroEL-GroES system forms a nano-cage that allows encapsulation of the non-native substrate proteins and provides a physical environment optimized to promote and accelerate protein folding. This Trichormus variabilis (strain ATCC 29413 / PCC 7937) (Anabaena variabilis) protein is Chaperonin GroEL 1.